We begin with the raw amino-acid sequence, 572 residues long: Methionine--tRNA ligase (572 aa).

The short motif at 11-21 (PYINGIKHLGN) is the 'HIGH' region element. The Zn(2+) site is built by C143, C146, C156, and C159. The 'KMSKS' region motif lies at 346–350 (QFSTS). T349 contributes to the ATP binding site.

Belongs to the class-I aminoacyl-tRNA synthetase family. MetG type 1 subfamily. In terms of assembly, monomer. The cofactor is Zn(2+).

The protein resides in the cytoplasm. It catalyses the reaction tRNA(Met) + L-methionine + ATP = L-methionyl-tRNA(Met) + AMP + diphosphate. Its function is as follows. Is required not only for elongation of protein synthesis but also for the initiation of all mRNA translation through initiator tRNA(fMet) aminoacylation. The chain is Methionine--tRNA ligase from Cereibacter sphaeroides (strain ATCC 17025 / ATH 2.4.3) (Rhodobacter sphaeroides).